The chain runs to 308 residues: Cytochrome b (308 aa).

The next 4 helical transmembrane spans lie at phenylalanine 1 to methionine 21, tryptophan 45 to isoleucine 66, tryptophan 81 to leucine 101, and phenylalanine 146 to threonine 166. The heme b site is built by histidine 51 and histidine 65. Heme b is bound by residues histidine 150 and histidine 164. An a ubiquinone-binding site is contributed by histidine 169. Helical transmembrane passes span threonine 194 to serine 214, leucine 256 to histidine 276, and leucine 288 to serine 308.

This sequence belongs to the cytochrome b family. The cytochrome bc1 complex contains 11 subunits: 3 respiratory subunits (MT-CYB, CYC1 and UQCRFS1), 2 core proteins (UQCRC1 and UQCRC2) and 6 low-molecular weight proteins (UQCRH/QCR6, UQCRB/QCR7, UQCRQ/QCR8, UQCR10/QCR9, UQCR11/QCR10 and a cleavage product of UQCRFS1). This cytochrome bc1 complex then forms a dimer. The cofactor is heme b.

It is found in the mitochondrion inner membrane. In terms of biological role, component of the ubiquinol-cytochrome c reductase complex (complex III or cytochrome b-c1 complex) that is part of the mitochondrial respiratory chain. The b-c1 complex mediates electron transfer from ubiquinol to cytochrome c. Contributes to the generation of a proton gradient across the mitochondrial membrane that is then used for ATP synthesis. In Baeolophus inornatus (Oak titmouse), this protein is Cytochrome b (MT-CYB).